Consider the following 692-residue polypeptide: MARQFSLENTRNIGIMAHIDAGKTTTTERILFYTGRVHKIGEVHEGAATMDWMEQEQERGITITSAATTAQWKGHRINIIDTPGHVDFTVEVERSLRVLDGAVAVLDAQSGVEPQTETVWRQATTYGVPRIVFVNKMDKIGADFLYSVKTLHERLQANAHPVQLPIGAEDQFTGIIDLVEMCAYHYHDELGKNIERIEIPEDYRDMAEEYRGKLIEAVAELDEELMMKYLEGEEITKEELKAAIRKATVSVQFFPVFCGSAFKNKGVQLMLDGVVDYLPSPVDIPAIKGTVPDTEEETVREARDDAPFAALAFKIMTDPYVGKLTFFRVYSGTLNSGSYVLNSTKRKRERIGRILQMHANHREEIAQVYAGDIAAAVGLKDTTTGDTLCDDKDPVILESMQFPEPVIQIAIEPKSKADQDKMSTALQKLQEEDPTFRAWTDQETGQTIIAGMGELHLDIIVDRMRREFKVEANVGAPQVAYRETFRKSAQVEGKFVRQSGGRGQYGHVWIEFSPNEEGKGFEFENAIVGGVVPREYIPAIQAGLEDAMQNGVLAGYPVVDIKAKLFDGSYHDVDSSEMAFKIAASMALKNAAAKCDPVLLEPIMKVEVIVPEEYLGDIMGDITSRRGRVEGMEARGNAQVVRAMVPLSEMFGYATSLRSNTQGRGTFTMVFDHYEEVPKSIAEEIIKKNKGE.

The region spanning 8–282 (ENTRNIGIMA…GVVDYLPSPV (275 aa)) is the tr-type G domain. GTP-binding positions include 17–24 (AHIDAGKT), 81–85 (DTPGH), and 135–138 (NKMD).

The protein belongs to the TRAFAC class translation factor GTPase superfamily. Classic translation factor GTPase family. EF-G/EF-2 subfamily.

The protein localises to the cytoplasm. Its function is as follows. Catalyzes the GTP-dependent ribosomal translocation step during translation elongation. During this step, the ribosome changes from the pre-translocational (PRE) to the post-translocational (POST) state as the newly formed A-site-bound peptidyl-tRNA and P-site-bound deacylated tRNA move to the P and E sites, respectively. Catalyzes the coordinated movement of the two tRNA molecules, the mRNA and conformational changes in the ribosome. The chain is Elongation factor G from Anoxybacillus flavithermus (strain DSM 21510 / WK1).